A 137-amino-acid polypeptide reads, in one-letter code: Major seminal plasma glycoprotein PSP-II (137 aa).

Residues 1 to 21 (MKLGTAIPWALLLSTATLVST) form the signal peptide. Disulfide bonds link C30-C51 and C74-C95. Residues 30–131 (CGRVIKDTSG…SPFLIYFYGS (102 aa)) form the CUB domain. Residue N119 is glycosylated (N-linked (GlcNAc...) (complex) asparagine).

In terms of assembly, monomer or heterodimer with PSP-I (depending on the type of glycosylation of PSP-I). Seminal plasma or sperm.

The protein resides in the secreted. This Sus scrofa (Pig) protein is Major seminal plasma glycoprotein PSP-II.